The sequence spans 22 residues: Unknown protein 20 from 2D-PAGE (22 aa).

In Bombyx mori (Silk moth), this protein is Unknown protein 20 from 2D-PAGE.